The chain runs to 404 residues: Keratin, type I cuticular Ha3-I (404 aa).

The tract at residues 1–56 is head; it reads MPYNCCLPAMSCRTSCSSRPCVPPSCHGCTLPGACNIPANVGNCNWFCEGSFNGNE. Residues 56–367 enclose the IF rod domain; sequence EKETMQFLND…GLLESEDCKL (312 aa). Positions 57–91 are coil 1A; sequence KETMQFLNDRLASYMEKVRQLERENAELECRIQER. The linker 1 stretch occupies residues 92-102; that stretch reads NQQQDPLVCPA. Residues 103–203 are coil 1B; the sequence is YQAYFRTIEE…HEQEVNTLRC (101 aa). Residues 204-219 are linker 12; that stretch reads QLGDRLNVEVDAAPTV. The coil 2 stretch occupies residues 220 to 363; that stretch reads DLNRVLNETR…NTYRGLLESE (144 aa). Positions 364–404 are tail; that stretch reads DCKLPCNPCATTNACDKPIGPCVPNPCVTRPRCGPCNTFVR.

It belongs to the intermediate filament family.

In Mus musculus (Mouse), this protein is Keratin, type I cuticular Ha3-I.